A 326-amino-acid polypeptide reads, in one-letter code: 4-hydroxy-3-methylbut-2-enyl diphosphate reductase 1 (326 aa).

Cys27 lines the [4Fe-4S] cluster pocket. His56 and His89 together coordinate (2E)-4-hydroxy-3-methylbut-2-enyl diphosphate. The dimethylallyl diphosphate site is built by His56 and His89. The isopentenyl diphosphate site is built by His56 and His89. Cys111 is a binding site for [4Fe-4S] cluster. Position 139 (His139) interacts with (2E)-4-hydroxy-3-methylbut-2-enyl diphosphate. His139 serves as a coordination point for dimethylallyl diphosphate. Residue His139 coordinates isopentenyl diphosphate. Glu141 serves as the catalytic Proton donor. Thr179 lines the (2E)-4-hydroxy-3-methylbut-2-enyl diphosphate pocket. Residue Cys209 participates in [4Fe-4S] cluster binding. Residues Ser237, Ser238, Asn239, and Ser281 each coordinate (2E)-4-hydroxy-3-methylbut-2-enyl diphosphate. Ser237, Ser238, Asn239, and Ser281 together coordinate dimethylallyl diphosphate. Residues Ser237, Ser238, Asn239, and Ser281 each coordinate isopentenyl diphosphate.

This sequence belongs to the IspH family. [4Fe-4S] cluster is required as a cofactor.

It carries out the reaction isopentenyl diphosphate + 2 oxidized [2Fe-2S]-[ferredoxin] + H2O = (2E)-4-hydroxy-3-methylbut-2-enyl diphosphate + 2 reduced [2Fe-2S]-[ferredoxin] + 2 H(+). It catalyses the reaction dimethylallyl diphosphate + 2 oxidized [2Fe-2S]-[ferredoxin] + H2O = (2E)-4-hydroxy-3-methylbut-2-enyl diphosphate + 2 reduced [2Fe-2S]-[ferredoxin] + 2 H(+). It functions in the pathway isoprenoid biosynthesis; dimethylallyl diphosphate biosynthesis; dimethylallyl diphosphate from (2E)-4-hydroxy-3-methylbutenyl diphosphate: step 1/1. The protein operates within isoprenoid biosynthesis; isopentenyl diphosphate biosynthesis via DXP pathway; isopentenyl diphosphate from 1-deoxy-D-xylulose 5-phosphate: step 6/6. Its function is as follows. Catalyzes the conversion of 1-hydroxy-2-methyl-2-(E)-butenyl 4-diphosphate (HMBPP) into a mixture of isopentenyl diphosphate (IPP) and dimethylallyl diphosphate (DMAPP). Acts in the terminal step of the DOXP/MEP pathway for isoprenoid precursor biosynthesis. This is 4-hydroxy-3-methylbut-2-enyl diphosphate reductase 1 from Burkholderia pseudomallei (strain K96243).